The chain runs to 512 residues: Proline--tRNA ligase (512 aa).

Residues Ser-460–Asp-470 show a composition bias toward acidic residues. A disordered region spans residues Ser-460–Asn-484.

This sequence belongs to the class-II aminoacyl-tRNA synthetase family. ProS type 3 subfamily. As to quaternary structure, homodimer.

It localises to the cytoplasm. It carries out the reaction tRNA(Pro) + L-proline + ATP = L-prolyl-tRNA(Pro) + AMP + diphosphate. In terms of biological role, catalyzes the attachment of proline to tRNA(Pro) in a two-step reaction: proline is first activated by ATP to form Pro-AMP and then transferred to the acceptor end of tRNA(Pro). In Haloquadratum walsbyi (strain DSM 16790 / HBSQ001), this protein is Proline--tRNA ligase.